The following is a 420-amino-acid chain: Serine palmitoyltransferase (420 aa).

Residues 1-21 (MKHNLQDNLQGEQMANTNSNG) show a composition bias toward polar residues. Residues 1 to 25 (MKHNLQDNLQGEQMANTNSNGGKKP) form a disordered region. Residues 132–133 (GM), His233, Thr261, and Ser263 contribute to the pyridoxal 5'-phosphate site. Lys264 is modified (N6-(pyridoxal phosphate)lysine).

It belongs to the class-II pyridoxal-phosphate-dependent aminotransferase family. Homodimer. The cofactor is pyridoxal 5'-phosphate.

It is found in the cytoplasm. The protein resides in the cell inner membrane. It catalyses the reaction L-serine + hexadecanoyl-CoA + H(+) = 3-oxosphinganine + CO2 + CoA. It functions in the pathway lipid metabolism; sphingolipid metabolism. Its activity is regulated as follows. Significantly inhibited by palmitoyl-CoA concentrations greater than 100 uM. Catalyzes the condensation of L-serine with palmitoyl-CoA (hexadecanoyl-CoA) to produce 3-oxosphinganine. In Bacteriovorax stolpii (Bdellovibrio stolpii), this protein is Serine palmitoyltransferase.